We begin with the raw amino-acid sequence, 183 residues long: Ribulose bisphosphate carboxylase small subunit, chloroplastic 3 (183 aa).

Residues 1 to 57 (MASSLMSNAATTMAAATTTAQANMVAPFNGLKSVSAFPVTRKNNDITSVASNGGRVQ) constitute a chloroplast transit peptide.

Belongs to the RuBisCO small chain family. In terms of assembly, heterohexadecamer of 8 large and 8 small subunits.

The protein localises to the plastid. The protein resides in the chloroplast. In terms of biological role, ruBisCO catalyzes two reactions: the carboxylation of D-ribulose 1,5-bisphosphate, the primary event in carbon dioxide fixation, as well as the oxidative fragmentation of the pentose substrate. Both reactions occur simultaneously and in competition at the same active site. Although the small subunit is not catalytic it is essential for maximal activity. In Mesembryanthemum crystallinum (Common ice plant), this protein is Ribulose bisphosphate carboxylase small subunit, chloroplastic 3.